We begin with the raw amino-acid sequence, 483 residues long: Cobyric acid synthase (483 aa).

Residues 244-430 enclose the GATase cobBQ-type domain; sequence WLRVIAPVLP…LHGLFDHAEA (187 aa). Cysteine 325 functions as the Nucleophile in the catalytic mechanism. The active site involves histidine 422.

Belongs to the CobB/CobQ family. CobQ subfamily.

It functions in the pathway cofactor biosynthesis; adenosylcobalamin biosynthesis. In terms of biological role, catalyzes amidations at positions B, D, E, and G on adenosylcobyrinic A,C-diamide. NH(2) groups are provided by glutamine, and one molecule of ATP is hydrogenolyzed for each amidation. The sequence is that of Cobyric acid synthase from Methylobacillus flagellatus (strain ATCC 51484 / DSM 6875 / VKM B-1610 / KT).